The primary structure comprises 478 residues: Putative UDP-glucose flavonoid 3-O-glucosyltransferase 3 (478 aa).

The protein belongs to the UDP-glycosyltransferase family.

This chain is Putative UDP-glucose flavonoid 3-O-glucosyltransferase 3, found in Fragaria ananassa (Strawberry).